Reading from the N-terminus, the 588-residue chain is Snake venom 5'-nucleotidase (588 aa).

Residues 1 to 40 (MQTPKRRRGAQGCPRSSPSPPLLLLVRAVWFCAALSVAAG) form the signal peptide. The Zn(2+) site is built by aspartate 51 and histidine 53. Cysteine 66 and cysteine 71 are oxidised to a cystine. Positions 99 and 131 each coordinate Zn(2+). A glycan (N-linked (GlcNAc...) asparagine) is linked at asparagine 167. Zn(2+)-binding residues include histidine 234 and histidine 257. Asparagine 347 and asparagine 361 each carry an N-linked (GlcNAc...) asparagine glycan. Cystine bridges form between cysteine 367–cysteine 372 and cysteine 379–cysteine 401. AMP is bound at residue arginine 368. Positions 404 and 409 each coordinate AMP. The N-linked (GlcNAc...) asparagine glycan is linked to asparagine 418. Phenylalanine 432 is an AMP binding site. A disulfide bond links cysteine 491 and cysteine 494. Positions 515 and 521 each coordinate AMP. The N-linked (GlcNAc...) asparagine glycan is linked to asparagine 532. The GPI-anchor amidated serine moiety is linked to residue serine 564. Residues 565 to 588 (AGTLFQAQLFLTWGLCVSLLYFIL) constitute a propeptide, removed in mature form.

This sequence belongs to the 5'-nucleotidase family. Zn(2+) is required as a cofactor. Post-translationally, venom 5'-nucleotidases (or a part thereof) may be released into the venom via exosome-like vesicles. They may be attached via a GPI anchor to the membrane of these vesicles. Soluble forms of 5'-nucleotidase might be released by cleavage of the ectodomain in the exosome-like vesicles or venom gland cells. Expressed by the venom gland.

The protein localises to the membrane. It carries out the reaction a ribonucleoside 5'-phosphate + H2O = a ribonucleoside + phosphate. Its function is as follows. Hydrolyzes nucleotides into nucleosides. Snake venom 5'-nucleotidases are widely distributed among venomous snake taxa, but there is a lack of information about their biological activities. They have been shown to inhibit platelet aggregation. This effect may be due to the liberation of inhibitory AMP or adenosine by its action on ADP released upon initiation of aggregation. Venom 5'-nucleotidases are also known to synergistically act in vivo with other toxins like ADPases, phospholipases, and disintegrins to exert a more pronounced anti-coagulant effect. In Crotalus adamanteus (Eastern diamondback rattlesnake), this protein is Snake venom 5'-nucleotidase.